Here is a 472-residue protein sequence, read N- to C-terminus: N(6)-adenine-specific methyltransferase METTL4 (472 aa).

This sequence belongs to the MT-A70-like family.

It localises to the nucleus. Its subcellular location is the cytoplasm. The protein localises to the cytosol. It is found in the mitochondrion matrix. The catalysed reaction is a 2'-O-methyladenosine in U2 snRNA + S-adenosyl-L-methionine = an N(6)-methyl-2'-O-methyladenosine in U2 snRNA + S-adenosyl-L-homocysteine + H(+). It carries out the reaction a 2'-deoxyadenosine in DNA + S-adenosyl-L-methionine = an N(6)-methyl-2'-deoxyadenosine in DNA + S-adenosyl-L-homocysteine + H(+). Its function is as follows. N(6)-adenine-specific methyltransferase that can methylate both RNAs and DNA. Acts as a N(6)-adenine-specific RNA methyltransferase by catalyzing formation of N6,2'-O-dimethyladenosine (m6A(m)) on internal positions of U2 small nuclear RNA (snRNA): methylates the 6th position of adenine residues with a pre-deposited 2'-O-methylation. Internal m6A(m) methylation of snRNAs regulates RNA splicing. Also able to act as a N(6)-adenine-specific DNA methyltransferase by mediating methylation of DNA on the 6th position of adenine (N(6)-methyladenosine). The existence of N(6)-methyladenosine (m6A) on DNA is however unclear in mammals, and additional evidences are required to confirm the role of the N(6)-adenine-specific DNA methyltransferase activity of METTL4 in vivo. Acts as a regulator of mitochondrial transcript levels and mitochondrial DNA (mtDNA) copy number by mediating mtDNA N(6)-methylation: m6A on mtDNA reduces transcription by repressing TFAM DNA-binding and bending. N(6)-methyladenosine deposition by METTL4 regulates Polycomb silencing by triggering ubiquitination and degradation of sensor proteins ASXL1 and MPND, leading to inactivation of the PR-DUB complex and subsequent preservation of Polycomb silencing. This Homo sapiens (Human) protein is N(6)-adenine-specific methyltransferase METTL4.